An 837-amino-acid polypeptide reads, in one-letter code: Semaphorin-4G (837 aa).

The signal sequence occupies residues 1 to 17; sequence MWGRLWPLLFSFLTVTA. At 18 to 673 the chain is on the extracellular side; sequence VPGPSLRRPS…GAQLAHDMRM (656 aa). Residues 35-503 form the Sema domain; the sequence is RLTISYEELS…AASGVLQFPL (469 aa). Residues Asn55, Asn111, and Asn126 are each glycosylated (N-linked (GlcNAc...) asparagine). A disulfide bond links Cys104 and Cys115. 3 cysteine pairs are disulfide-bonded: Cys133–Cys142, Cys268–Cys375, and Cys292–Cys335. Asn386 is a glycosylation site (N-linked (GlcNAc...) asparagine). Positions 505–556 constitute a PSI domain; the sequence is SCSRYQSCYDCILARDPYCGWDSSIHACMVATTVANRTELIQDIERGNRGCE. 2 disulfides stabilise this stretch: Cys506/Cys523 and Cys515/Cys532. N-linked (GlcNAc...) asparagine glycosylation is found at Asn540 and Asn596. One can recognise an Ig-like C2-type domain in the interval 565–647; sequence PPLKTRSVLR…RMLLASYSLT (83 aa). Residues Cys582 and Cys630 are joined by a disulfide bond. Residues 674 to 694 form a helical membrane-spanning segment; that stretch reads FYVVAIAILGGLCLILASSLL. Topologically, residues 695-837 are cytoplasmic; it reads YVACLKGGRR…LVEQLDESSV (143 aa). The segment at 721–776 is disordered; that stretch reads SAVQLQTVSGQCPGEEDEGDDGEGTGGLESGCLQIIPGEGAPAPPPPPPPPPPAEL. Residues 734–743 are compositionally biased toward acidic residues; the sequence is GEEDEGDDGE. Residues 762-774 are compositionally biased toward pro residues; that stretch reads PAPPPPPPPPPPA. Phosphoserine is present on residues Ser794 and Ser836.

The protein belongs to the semaphorin family. Interacts with PLXNB2. In terms of tissue distribution, brain, spinal cord, and several sensory organs as well as specific populations of projection neurons.

The protein resides in the cell membrane. Functionally, cell surface receptor for PLXNB2. May play a role in axon guidance. The protein is Semaphorin-4G (Sema4g) of Mus musculus (Mouse).